Consider the following 147-residue polypeptide: MKQLFPPPPGTSLTHALGAWRGRERAQAATSLLASSASQFPTAVEDALMSVLTSHCAPSTPAATRAQQTGTRGHIHPACPCQQSCVGASRPPGRPQIFLPLTTALSLEAYAADTCSAADFLHNPSSWGKVWYLNEASFDLYSYHYFW.

This is an uncharacterized protein from Homo sapiens (Human).